The chain runs to 245 residues: MNARTPNSLTMGGDKSFADASPVPIANVRSLIEATFQRLRADIVEGRLAAGSRLAIEDLKSRYEVSGGTVREALSLLVANNLVQTQAQRGFHVTPMSLDDMRDLAATRIALECEALRQSVLNGDAEWEARVVSSYHRLSLLDERTMRDPVHLFNQWEQANRDFHEALISACSSAWTQRFLSILYLQMERYRRLTAMHNRPARNVHEEHLALRDSALARDAERCTELLRMHIESSISVVRQFGLLR.

An HTH gntR-type domain is found at 29-96 (RSLIEATFQR…AQRGFHVTPM (68 aa)). Residues 56 to 75 (IEDLKSRYEVSGGTVREALS) constitute a DNA-binding region (H-T-H motif).

This is an uncharacterized protein from Paraburkholderia xenovorans (strain LB400).